We begin with the raw amino-acid sequence, 137 residues long: Small ribosomal subunit protein bS6 (137 aa).

The disordered stretch occupies residues Ile96–Glu137. Residues Lys104–Ala124 show a composition bias toward basic and acidic residues. The span at Ala125–Glu137 shows a compositional bias: acidic residues.

The protein belongs to the bacterial ribosomal protein bS6 family.

In terms of biological role, binds together with bS18 to 16S ribosomal RNA. In Shewanella halifaxensis (strain HAW-EB4), this protein is Small ribosomal subunit protein bS6.